A 178-amino-acid chain; its full sequence is Caveolin-1 (178 aa).

Position 2 is an N-acetylserine (Ser2). Ser2 is modified (phosphoserine). Residues 2–94 (SGGKYVDSEG…WKASFTTFTV (93 aa)) form a required for homooligomerization region. The Cytoplasmic segment spans residues 2–104 (SGGKYVDSEG…TKYWFYRLLS (103 aa)). At Lys5 the chain carries N6-acetyllysine; alternate. Residue Lys5 forms a Glycyl lysine isopeptide (Lys-Gly) (interchain with G-Cter in ubiquitin); alternate linkage. Tyr6 is subject to Phosphotyrosine. Position 9 is a phosphoserine (Ser9). Phosphotyrosine; by ABL1 is present on Tyr14. Tyr25 bears the Phosphotyrosine mark. Residues Lys26, Lys30, Lys39, Lys47, and Lys57 each participate in a glycyl lysine isopeptide (Lys-Gly) (interchain with G-Cter in ubiquitin) cross-link. Residues 82–94 (DGIWKASFTTFTV) form an interaction with CAVIN3 region. An intramembrane region (helical) is located at residues 105–125 (ALFGIPMALIWGIYFAILSFL). The Cytoplasmic portion of the chain corresponds to 126-178 (HIWAVVPCIKSFLIEIQCISRVYSIYVHTFCDPLFEAIGKIFSNIRINMQKEI). The interval 131-142 (VPCIKSFLIEIQ) is interacts with SPRY1, SPRY2, SPRY3 and SPRY4. 3 S-palmitoyl cysteine lipidation sites follow: Cys133, Cys143, and Cys156. Positions 149–160 (SIYVHTFCDPLF) are interacts with SPRY1, SPRY2, and SPRY4. The interacts with SPRY1, SPRY2, SPRY3 and SPRY4 stretch occupies residues 167 to 178 (FSNIRINMQKEI).

It belongs to the caveolin family. In terms of assembly, homooligomer. Interacts with GLIPR2. Interacts with NOSTRIN. Interacts with SNAP25 and STX1A. Interacts (via the N-terminus) with DPP4; the interaction is direct. Interacts with CTNNB1, CDH1 and JUP. Interacts with PACSIN2; this interaction induces membrane tubulation. Interacts with SLC7A9. Interacts with BMX and BTK. Interacts with TGFBR1. Interacts with CAVIN3 (via leucine-zipper domain) in a cholesterol-sensitive manner. Interacts with CAVIN1. Interacts with EHD2 in a cholesterol-dependent manner. Forms a ternary complex with UBXN6 and VCP; mediates CAV1 targeting to lysosomes for degradation. Interacts with ABCG1; this interaction regulates ABCG1-mediated cholesterol efflux. Interacts with NEU3; this interaction enhances NEU3 sialidase activity within caveola. Interacts (via C-terminus) with SPRY1, SPRY2 (via C-terminus), SPRY3, and SPRY4. Interacts with IGFBP5; this interaction allows trafficking of IGFBP5 from the plasma membrane to the nucleus. Phosphorylated at Tyr-14 by ABL1 in response to oxidative stress. In terms of processing, ubiquitinated. Undergo monoubiquitination and multi- and/or polyubiquitination. Monoubiquitination of N-terminal lysines promotes integration in a ternary complex with UBXN6 and VCP which promotes oligomeric CAV1 targeting to lysosomes for degradation. Ubiquitinated by ZNRF1; leading to degradation and modulation of the TLR4-mediated immune response.

It localises to the golgi apparatus membrane. It is found in the cell membrane. The protein resides in the membrane. Its subcellular location is the caveola. The protein localises to the membrane raft. Its function is as follows. May act as a scaffolding protein within caveolar membranes. Forms a stable heterooligomeric complex with CAV2 that targets to lipid rafts and drives caveolae formation. Mediates the recruitment of CAVIN proteins (CAVIN1/2/3/4) to the caveolae. Interacts directly with G-protein alpha subunits and can functionally regulate their activity. Involved in the costimulatory signal essential for T-cell receptor (TCR)-mediated T-cell activation. Its binding to DPP4 induces T-cell proliferation and NF-kappa-B activation in a T-cell receptor/CD3-dependent manner. Recruits CTNNB1 to caveolar membranes and may regulate CTNNB1-mediated signaling through the Wnt pathway. Negatively regulates TGFB1-mediated activation of SMAD2/3 by mediating the internalization of TGFBR1 from membrane rafts leading to its subsequent degradation. Binds 20(S)-hydroxycholesterol (20(S)-OHC). The chain is Caveolin-1 (CAV1) from Muntiacus reevesi (Reeves' muntjac).